Here is a 284-residue protein sequence, read N- to C-terminus: Polyamine aminopropyltransferase (284 aa).

The region spanning 2–237 is the PABS domain; the sequence is ELWYTEQHTE…GHWLFGFASK (236 aa). Q31 serves as a coordination point for S-methyl-5'-thioadenosine. 2 residues coordinate spermidine: H62 and D86. S-methyl-5'-thioadenosine-binding positions include E106 and 137-138; that span reads DG. D155 serves as the catalytic Proton acceptor. 155–158 serves as a coordination point for spermidine; sequence DSTD. P162 contributes to the S-methyl-5'-thioadenosine binding site.

The protein belongs to the spermidine/spermine synthase family. Homodimer or homotetramer.

It is found in the cytoplasm. The catalysed reaction is S-adenosyl 3-(methylsulfanyl)propylamine + putrescine = S-methyl-5'-thioadenosine + spermidine + H(+). Its pathway is amine and polyamine biosynthesis; spermidine biosynthesis; spermidine from putrescine: step 1/1. Catalyzes the irreversible transfer of a propylamine group from the amino donor S-adenosylmethioninamine (decarboxy-AdoMet) to putrescine (1,4-diaminobutane) to yield spermidine. The protein is Polyamine aminopropyltransferase of Alkaliphilus oremlandii (strain OhILAs) (Clostridium oremlandii (strain OhILAs)).